The sequence spans 72 residues: Disintegrin cereberin (72 aa).

A Disintegrin domain is found at 1–72 (EAGEECDCGS…SADCPRNRFH (72 aa)). 6 disulfides stabilise this stretch: C6–C21, C8–C16, C15–C38, C29–C35, C34–C59, and C47–C66. Residues 51-53 (RGD) carry the Cell attachment site motif. Residues 51 to 72 (RGDNPDDRCTGQSADCPRNRFH) form a disordered region.

The protein belongs to the venom metalloproteinase (M12B) family. P-II subfamily. P-IIa sub-subfamily. As to quaternary structure, monomer (disintegrin). Expressed by the venom gland.

The protein localises to the secreted. In terms of biological role, inhibits fibrinogen interaction with platelet. Acts by binding to alpha-IIb/beta-3 (ITGA2B/ITGB3) on the platelet surface and inhibits aggregation induced by ADP, thrombin, platelet-activating factor and collagen. The polypeptide is Disintegrin cereberin (Crotalus cerberus (Arizona black rattlesnake)).